The following is a 311-amino-acid chain: Pyrimidine-specific ribonucleoside hydrolase RihA (311 aa).

Residue H240 is part of the active site.

Belongs to the IUNH family. RihA subfamily.

Its function is as follows. Hydrolyzes with equal efficiency cytidine or uridine to ribose and cytosine or uracil, respectively. This Escherichia coli O45:K1 (strain S88 / ExPEC) protein is Pyrimidine-specific ribonucleoside hydrolase RihA.